Reading from the N-terminus, the 318-residue chain is Probable carboxylesterase 1 (318 aa).

Met1 bears the N-acetylmethionine mark. Positions 79-81 (HGG) match the Involved in the stabilization of the negatively charged intermediate by the formation of the oxyanion hole motif. Residues Ser163, Asp258, and His290 contribute to the active site.

The protein belongs to the 'GDXG' lipolytic enzyme family. In terms of tissue distribution, expressed in roots, stems, flowers and siliques.

The catalysed reaction is a carboxylic ester + H2O = an alcohol + a carboxylate + H(+). Carboxylesterase acting on esters with varying acyl chain length. This is Probable carboxylesterase 1 (CXE1) from Arabidopsis thaliana (Mouse-ear cress).